The following is a 1801-amino-acid chain: Laminin subunit beta-2 (1801 aa).

Positions 1-35 (MEWASGKPGRGRQGQPVPWELRLGLLLSVLAATLA) are cleaved as a signal peptide. The Laminin N-terminal domain occupies 46-285 (SRGSCYPATG…ALYELVIRGN (240 aa)). Residue Asn251 is glycosylated (N-linked (GlcNAc...) asparagine). Cystine bridges form between Cys286/Cys295, Cys288/Cys313, Cys315/Cys324, Cys327/Cys347, Cys350/Cys359, Cys352/Cys377, Cys380/Cys389, Cys392/Cys410, Cys413/Cys426, Cys415/Cys441, Cys443/Cys452, Cys455/Cys470, Cys473/Cys487, Cys475/Cys494, Cys496/Cys505, Cys508/Cys522, Cys525/Cys537, Cys527/Cys544, and Cys546/Cys555. Laminin EGF-like domains are found at residues 286 to 349 (CFCY…ACRK), 350 to 412 (CECN…ACRP), 413 to 472 (CDCD…GCQR), and 473 to 524 (CQCN…GCRP). Asn371 carries N-linked (GlcNAc...) asparagine glycosylation. Positions 525 to 555 (CDCDVGGALDPQCDEATGQCPCRPHMIGRRC) constitute a Laminin EGF-like 5; truncated domain. A Laminin IV type B domain is found at 564–780 (RPFLDHLTWE…LLISASSLVY (217 aa)). Disulfide bonds link Cys786-Cys798, Cys788-Cys805, Cys807-Cys816, Cys819-Cys831, Cys834-Cys846, Cys836-Cys853, Cys855-Cys864, Cys867-Cys877, Cys880-Cys889, Cys882-Cys896, Cys899-Cys908, Cys911-Cys927, Cys930-Cys946, Cys932-Cys957, Cys959-Cys968, Cys971-Cys986, Cys989-Cys1003, Cys991-Cys1010, Cys1013-Cys1022, Cys1025-Cys1038, Cys1041-Cys1061, Cys1043-Cys1068, Cys1070-Cys1079, Cys1082-Cys1095, Cys1098-Cys1110, Cys1100-Cys1117, Cys1119-Cys1128, Cys1131-Cys1143, Cys1146-Cys1158, Cys1148-Cys1165, Cys1167-Cys1176, and Cys1179-Cys1190. 8 Laminin EGF-like domains span residues 786–833 (CQCD…GCQA), 834–879 (CQCS…NCRP), 880–929 (CVCN…QCRP), 930–988 (CPCP…RCQL), 989–1040 (CECS…SCHR), 1041–1097 (CTCN…GCQP), 1098–1145 (CACH…QCRA), and 1146–1192 (CDCD…ACHP). Residue Asn1088 is glycosylated (N-linked (GlcNAc...) asparagine). The segment at 1193 to 1412 (CHACFGDWDR…LSLTGVNELV (220 aa)) is domain II. Asn1252 is a glycosylation site (N-linked (GlcNAc...) asparagine). Positions 1259–1306 (AKLVEATEGLRHEIGKTTERLTQLEAELTDVQDENFNANHALSGLERD) form a coiled coil. N-linked (GlcNAc...) asparagine glycosylation is found at Asn1311 and Asn1351. A domain alpha region spans residues 1413 to 1445 (CGAPGDAPCATSPCGGAGCRDEDGQPRCGGLGC). The interval 1446-1801 (SGAAATADLA…LQVQIYNTCQ (356 aa)) is domain I. Residues 1475-1529 (GILSRVSETRRQAEEAQQRAQAALDKANASRGQVEQANQELRELIQNVKDFLSQE) adopt a coiled-coil conformation. N-linked (GlcNAc...) asparagine glycosylation occurs at Asn1502. Ser1535 carries the post-translational modification Phosphoserine. A coiled-coil region spans residues 1576–1793 (LAHTMGDVRR…RSVLQAINLQ (218 aa)). The segment covering 1684–1694 (ASTAEETAGSA) has biased composition (low complexity). The segment at 1684–1703 (ASTAEETAGSAQSRAREAEK) is disordered.

As to quaternary structure, laminin is a complex glycoprotein, consisting of three different polypeptide chains (alpha, beta, gamma), which are bound to each other by disulfide bonds into a cross-shaped molecule comprising one long and three short arms with globules at each end. Beta-2 is a subunit of laminin-3 (laminin-121 or S-laminin), laminin-4 (laminin-221 or S-merosin), laminin-7 (laminin-321 or KS-laminin), laminin-9 (laminin-421), laminin-11 (laminin-521), laminin-14 (laminin-423) and laminin-15 (laminin-523). As to expression, found in the basement membranes (major component). S-laminin is concentrated in the synaptic cleft of the neuromuscular junction.

Its subcellular location is the secreted. It is found in the extracellular space. It localises to the extracellular matrix. The protein localises to the basement membrane. Binding to cells via a high affinity receptor, laminin is thought to mediate the attachment, migration and organization of cells into tissues during embryonic development by interacting with other extracellular matrix components. The chain is Laminin subunit beta-2 (Lamb2) from Rattus norvegicus (Rat).